The primary structure comprises 837 residues: Vacuolar membrane protease (837 aa).

The Cytoplasmic segment spans residues 1–36 (MSEEEVHDTSSEASEVFTNQPNAFVRGVRSIFGYRK). A helical transmembrane segment spans residues 37-57 (TSLTLFVILTIVVTAGLSFYD). Over 58-355 (NSLELTIELP…FATPISALAR (298 aa)) the chain is Vacuolar. Asn-143 carries an N-linked (GlcNAc...) asparagine glycan. Zn(2+)-binding residues include His-157 and Asp-169. The active-site Proton acceptor is Glu-201. Positions 202, 227, and 299 each coordinate Zn(2+). Residues 356 to 376 (VNLVLLVLFPVVSTPLLFVIV) form a helical membrane-spanning segment. Residues 377–384 (KYKKWKLR) are Cytoplasmic-facing. The chain crosses the membrane as a helical span at residues 385–405 (VTNFLGVPLAMGLAVAVGQVG). At 406 to 415 (NPMLVSSHPM) the chain is on the vacuolar side. A helical transmembrane segment spans residues 416–436 (MVVATTTSIVVLVYYVVLNGV). The Cytoplasmic segment spans residues 437-446 (DWVNTSSDQK). A helical transmembrane segment spans residues 447–467 (LVTMIEVSFVYWVVLVYVTWS). Residues 468 to 474 (GGDHTGE) are Vacuolar-facing. A helical membrane pass occupies residues 475–495 (FGVTVLFFVQASTSLLGLIGW). Topologically, residues 496 to 539 (TFTRVRGGDEPLLSGEEERYGTEDERDTEKPLVEHNYDWSLQYL) are cytoplasmic. Residues 540–560 (LIVPVSSLVVYNSGWLVLEGV) form a helical membrane-spanning segment. N-linked (GlcNAc...) asparagine glycosylation occurs at Asn-561. Residues 561–572 (NKTVQESLASEH) lie on the Vacuolar side of the membrane. A helical transmembrane segment spans residues 573–593 (LIYWIVVVFSQFLVLPVVPFI). Residues 594 to 598 (TKFNR) lie on the Cytoplasmic side of the membrane. Residues 599 to 619 (YIVLGLSVVAVVGVLMSMAVH) form a helical membrane-spanning segment. The Vacuolar segment spans residues 620–837 (PFNQGSPMKL…LVGVVKHVDV (218 aa)). An N-linked (GlcNAc...) asparagine glycan is attached at Asn-689.

It belongs to the peptidase M28 family. Zn(2+) serves as cofactor.

Its subcellular location is the vacuole membrane. In terms of biological role, may be involved in vacuolar sorting and osmoregulation. The protein is Vacuolar membrane protease of Candida albicans (strain WO-1) (Yeast).